Here is a 287-residue protein sequence, read N- to C-terminus: S-methyl-5'-thioadenosine phosphorylase (287 aa).

Residues Thr13 and 55–56 (RH) contribute to the phosphate site. Met186 is a substrate binding site. A phosphate-binding site is contributed by Thr187. 210–212 (DYD) is a substrate binding site.

This sequence belongs to the PNP/MTAP phosphorylase family. MTAP subfamily. Homohexamer. Dimer of a homotrimer.

It carries out the reaction S-methyl-5'-thioadenosine + phosphate = 5-(methylsulfanyl)-alpha-D-ribose 1-phosphate + adenine. The protein operates within amino-acid biosynthesis; L-methionine biosynthesis via salvage pathway; S-methyl-5-thio-alpha-D-ribose 1-phosphate from S-methyl-5'-thioadenosine (phosphorylase route): step 1/1. In terms of biological role, catalyzes the reversible phosphorylation of S-methyl-5'-thioadenosine (MTA) to adenine and 5-methylthioribose-1-phosphate. Involved in the breakdown of MTA, a major by-product of polyamine biosynthesis. Responsible for the first step in the methionine salvage pathway after MTA has been generated from S-adenosylmethionine. Has broad substrate specificity with 6-aminopurine nucleosides as preferred substrates. This Leptospira interrogans serogroup Icterohaemorrhagiae serovar Lai (strain 56601) protein is S-methyl-5'-thioadenosine phosphorylase.